Here is a 263-residue protein sequence, read N- to C-terminus: HTH-type transcriptional repressor NanR (263 aa).

The interval 1–23 (MSPMNAFDPQAEDSTTTIGRNLR) is disordered. Residues 30 to 98 (KKLSEMVEEE…NGERARVSRP (69 aa)) form the HTH gntR-type domain. The H-T-H motif DNA-binding region spans 58-77 (ERELMAFFNVGRPSVREALA).

Belongs to the NanR family.

In terms of biological role, transcriptional repressor that controls expression of the genes required for the catabolism of sialic acids. The polypeptide is HTH-type transcriptional repressor NanR (Escherichia coli O45:K1 (strain S88 / ExPEC)).